Here is a 505-residue protein sequence, read N- to C-terminus: Cell division control protein 6 homolog B (505 aa).

Residues 37 to 72 form a disordered region; the sequence is KRKMRSDSAAVSGNSVSTPKKLKSHLPSSVPNPGMS. Over residues 45–54 the composition is skewed to polar residues; sequence AAVSGNSVST.

The protein belongs to the CDC6/cdc18 family.

Its subcellular location is the nucleus. In terms of biological role, may be involved in the initiation of DNA replication. The sequence is that of Cell division control protein 6 homolog B from Arabidopsis thaliana (Mouse-ear cress).